A 343-amino-acid chain; its full sequence is Biotin synthase (343 aa).

In terms of domain architecture, Radical SAM core spans 36–254 (NTIQISTLLS…IAVARIMMPK (219 aa)). 3 residues coordinate [4Fe-4S] cluster: Cys-51, Cys-55, and Cys-58. Positions 95, 126, 186, and 258 each coordinate [2Fe-2S] cluster.

Belongs to the radical SAM superfamily. Biotin synthase family. As to quaternary structure, homodimer. [4Fe-4S] cluster is required as a cofactor. It depends on [2Fe-2S] cluster as a cofactor.

It catalyses the reaction (4R,5S)-dethiobiotin + (sulfur carrier)-SH + 2 reduced [2Fe-2S]-[ferredoxin] + 2 S-adenosyl-L-methionine = (sulfur carrier)-H + biotin + 2 5'-deoxyadenosine + 2 L-methionine + 2 oxidized [2Fe-2S]-[ferredoxin]. It participates in cofactor biosynthesis; biotin biosynthesis; biotin from 7,8-diaminononanoate: step 2/2. In terms of biological role, catalyzes the conversion of dethiobiotin (DTB) to biotin by the insertion of a sulfur atom into dethiobiotin via a radical-based mechanism. The protein is Biotin synthase of Buchnera aphidicola subsp. Acyrthosiphon pisum (strain 5A).